A 443-amino-acid polypeptide reads, in one-letter code: Methyl-coenzyme M reductase I subunit beta (443 aa).

Position 367 (Tyr367) interacts with coenzyme M. Gly369 contributes to the coenzyme B binding site.

It belongs to the methyl-coenzyme M reductase beta subunit family. In terms of assembly, MCR is a hexamer of two alpha, two beta, and two gamma chains, forming a dimer of heterotrimers. Coenzyme F430 is required as a cofactor.

The protein localises to the cytoplasm. The catalysed reaction is coenzyme B + methyl-coenzyme M = methane + coenzyme M-coenzyme B heterodisulfide. It participates in one-carbon metabolism; methyl-coenzyme M reduction; methane from methyl-coenzyme M: step 1/1. Its activity is regulated as follows. Methyl-coenzyme M reductase activity is inhibited by 3-nitrooxypropanol (3-NOP) in vitro and in vivo, by oxidation of its active site Ni(I), which stops both growth and methanogenesis. Is also inhibited by the reaction product CoM-S-S-CoB. In terms of biological role, component of the methyl-coenzyme M reductase (MCR) I that catalyzes the reductive cleavage of methyl-coenzyme M (CoM-S-CH3 or 2-(methylthio)ethanesulfonate) using coenzyme B (CoB or 7-mercaptoheptanoylthreonine phosphate) as reductant which results in the production of methane and the mixed heterodisulfide of CoB and CoM (CoM-S-S-CoB). This is the final step in methanogenesis. Neither N-6-mercaptohexanoylthreonine phosphate (H-S-HxoTP) nor N-8-mercaptooctanoylthreonine phosphate (H-SOcoTP) nor any other thiol compound such as CoA or CoM can substitute for CoB as the electron donor. This chain is Methyl-coenzyme M reductase I subunit beta (mcrB), found in Methanothermobacter marburgensis (strain ATCC BAA-927 / DSM 2133 / JCM 14651 / NBRC 100331 / OCM 82 / Marburg) (Methanobacterium thermoautotrophicum).